A 562-amino-acid chain; its full sequence is NAD-dependent malic enzyme (562 aa).

The Proton donor role is filled by Y101. R154 contributes to the NAD(+) binding site. K172 acts as the Proton acceptor in catalysis. E243, D244, and D267 together coordinate a divalent metal cation. NAD(+)-binding residues include D267 and N415.

It belongs to the malic enzymes family. As to quaternary structure, homotetramer. Requires Mg(2+) as cofactor. It depends on Mn(2+) as a cofactor.

It carries out the reaction (S)-malate + NAD(+) = pyruvate + CO2 + NADH. It catalyses the reaction oxaloacetate + H(+) = pyruvate + CO2. The chain is NAD-dependent malic enzyme from Aliivibrio fischeri (strain ATCC 700601 / ES114) (Vibrio fischeri).